The chain runs to 709 residues: Kelch domain-containing protein STK_09390 (709 aa).

An N-terminal signal peptide occupies residues 1 to 22; the sequence is MKRNTLLALVLVILIFPTLSTA. Kelch repeat units follow at residues 49–94, 96–140, 141–192, 193–240, 242–288, and 290–340; these read KIFL…VCNN, LYVV…SYDY, KIYV…FNGS, ALFV…YYNG, MYLV…VQIG, and KLII…DTNA. Fibronectin type-III domains lie at 315-405, 406-488, 489-566, and 568-643; these read PPPK…VPNP, PIIK…ASKA, NLTV…IYYI, and PASP…NDVR.

In Sulfurisphaera tokodaii (strain DSM 16993 / JCM 10545 / NBRC 100140 / 7) (Sulfolobus tokodaii), this protein is Kelch domain-containing protein STK_09390.